Reading from the N-terminus, the 58-residue chain is MLRWALIFFIIAIIAAVFGFGGIATAAAGIAKILFYLFLVVAVVMLVSALLAGRNITR.

The next 2 helical transmembrane spans lie at 4 to 24 and 33 to 53; these read WALIFFIIAIIAAVFGFGGIA and ILFYLFLVVAVVMLVSALLAG.

It belongs to the UPF0391 family.

The protein resides in the cell membrane. The polypeptide is UPF0391 membrane protein Gbem_0127 (Citrifermentans bemidjiense (strain ATCC BAA-1014 / DSM 16622 / JCM 12645 / Bem) (Geobacter bemidjiensis)).